We begin with the raw amino-acid sequence, 93 residues long: MASIAAERIDRLHTLARAAARTGDDDRAREYVRLARRLAERNRLTLPPAFRRFTCDDCDAVLVPGRNARVRTRSGHVVVTCDCGTHARYPYTG.

C55, C58, C81, and C83 together coordinate Zn(2+).

It belongs to the eukaryotic/archaeal RNase P protein component 4 family. As to quaternary structure, consists of a catalytic RNA component and at least 4-5 protein subunits. Requires Zn(2+) as cofactor.

The protein resides in the cytoplasm. It catalyses the reaction Endonucleolytic cleavage of RNA, removing 5'-extranucleotides from tRNA precursor.. In terms of biological role, part of ribonuclease P, a protein complex that generates mature tRNA molecules by cleaving their 5'-ends. This Halobacterium salinarum (strain ATCC 29341 / DSM 671 / R1) protein is Ribonuclease P protein component 4.